We begin with the raw amino-acid sequence, 326 residues long: Tetraacyldisaccharide 4'-kinase (326 aa).

Residue 55–62 (TVGGNGKT) participates in ATP binding.

This sequence belongs to the LpxK family.

The catalysed reaction is a lipid A disaccharide + ATP = a lipid IVA + ADP + H(+). It functions in the pathway glycolipid biosynthesis; lipid IV(A) biosynthesis; lipid IV(A) from (3R)-3-hydroxytetradecanoyl-[acyl-carrier-protein] and UDP-N-acetyl-alpha-D-glucosamine: step 6/6. Its function is as follows. Transfers the gamma-phosphate of ATP to the 4'-position of a tetraacyldisaccharide 1-phosphate intermediate (termed DS-1-P) to form tetraacyldisaccharide 1,4'-bis-phosphate (lipid IVA). The polypeptide is Tetraacyldisaccharide 4'-kinase (Tolumonas auensis (strain DSM 9187 / NBRC 110442 / TA 4)).